The following is a 205-amino-acid chain: Holliday junction branch migration complex subunit RuvA (205 aa).

The interval 1–64 (MIGKLKGVVD…EDMIRLYGFR (64 aa)) is domain I. Residues 65–143 (SDAEREWFRL…AFAPVDPALI (79 aa)) are domain II. The flexible linker stretch occupies residues 144-152 (RLAGAVEER). Positions 153–205 (TAPQPVADAISALVNLGYPQIQASAAVAAALQGAGEGAEAKTLIRLGLRELAR) are domain III.

This sequence belongs to the RuvA family. As to quaternary structure, homotetramer. Forms an RuvA(8)-RuvB(12)-Holliday junction (HJ) complex. HJ DNA is sandwiched between 2 RuvA tetramers; dsDNA enters through RuvA and exits via RuvB. An RuvB hexamer assembles on each DNA strand where it exits the tetramer. Each RuvB hexamer is contacted by two RuvA subunits (via domain III) on 2 adjacent RuvB subunits; this complex drives branch migration. In the full resolvosome a probable DNA-RuvA(4)-RuvB(12)-RuvC(2) complex forms which resolves the HJ.

The protein localises to the cytoplasm. The RuvA-RuvB-RuvC complex processes Holliday junction (HJ) DNA during genetic recombination and DNA repair, while the RuvA-RuvB complex plays an important role in the rescue of blocked DNA replication forks via replication fork reversal (RFR). RuvA specifically binds to HJ cruciform DNA, conferring on it an open structure. The RuvB hexamer acts as an ATP-dependent pump, pulling dsDNA into and through the RuvAB complex. HJ branch migration allows RuvC to scan DNA until it finds its consensus sequence, where it cleaves and resolves the cruciform DNA. The protein is Holliday junction branch migration complex subunit RuvA of Methylobacterium nodulans (strain LMG 21967 / CNCM I-2342 / ORS 2060).